A 132-amino-acid chain; its full sequence is Fatty acid-binding protein 1 (132 aa).

Residues R106 and R128–Y130 each bind a fatty acid.

Belongs to the calycin superfamily. Fatty-acid binding protein (FABP) family. In terms of assembly, monomer. Midgut.

Its subcellular location is the cytoplasm. Its function is as follows. Binds fatty acids in a 1:1 molar ratio. The polypeptide is Fatty acid-binding protein 1 (MFB1) (Manduca sexta (Tobacco hawkmoth)).